The chain runs to 288 residues: Elongation factor Ts (288 aa).

An involved in Mg(2+) ion dislocation from EF-Tu region spans residues 82-85; the sequence is TDFV.

The protein belongs to the EF-Ts family.

The protein resides in the cytoplasm. In terms of biological role, associates with the EF-Tu.GDP complex and induces the exchange of GDP to GTP. It remains bound to the aminoacyl-tRNA.EF-Tu.GTP complex up to the GTP hydrolysis stage on the ribosome. The chain is Elongation factor Ts from Chlorobium phaeobacteroides (strain BS1).